Here is a 284-residue protein sequence, read N- to C-terminus: Elongation factor Ts (284 aa).

An involved in Mg(2+) ion dislocation from EF-Tu region spans residues 80–83; sequence TDFV.

Belongs to the EF-Ts family.

It localises to the cytoplasm. In terms of biological role, associates with the EF-Tu.GDP complex and induces the exchange of GDP to GTP. It remains bound to the aminoacyl-tRNA.EF-Tu.GTP complex up to the GTP hydrolysis stage on the ribosome. This is Elongation factor Ts from Neisseria meningitidis serogroup A / serotype 4A (strain DSM 15465 / Z2491).